The sequence spans 341 residues: tRNA N6-adenosine threonylcarbamoyltransferase (341 aa).

The Fe cation site is built by histidine 111 and histidine 115. Substrate contacts are provided by residues 134 to 138 (LVSGG), aspartate 167, glycine 180, and asparagine 276. Fe cation is bound at residue aspartate 304.

This sequence belongs to the KAE1 / TsaD family. Fe(2+) serves as cofactor.

The protein localises to the cytoplasm. The enzyme catalyses L-threonylcarbamoyladenylate + adenosine(37) in tRNA = N(6)-L-threonylcarbamoyladenosine(37) in tRNA + AMP + H(+). Functionally, required for the formation of a threonylcarbamoyl group on adenosine at position 37 (t(6)A37) in tRNAs that read codons beginning with adenine. Is involved in the transfer of the threonylcarbamoyl moiety of threonylcarbamoyl-AMP (TC-AMP) to the N6 group of A37, together with TsaE and TsaB. TsaD likely plays a direct catalytic role in this reaction. The protein is tRNA N6-adenosine threonylcarbamoyltransferase of Pseudomonas entomophila (strain L48).